The sequence spans 101 residues: Small ribosomal subunit protein uS14 (101 aa).

Belongs to the universal ribosomal protein uS14 family. As to quaternary structure, part of the 30S ribosomal subunit. Contacts proteins S3 and S10.

Functionally, binds 16S rRNA, required for the assembly of 30S particles and may also be responsible for determining the conformation of the 16S rRNA at the A site. The chain is Small ribosomal subunit protein uS14 from Haemophilus influenzae (strain PittGG).